Reading from the N-terminus, the 310-residue chain is N-acetyl-gamma-glutamyl-phosphate reductase (310 aa).

Cysteine 117 is an active-site residue.

Belongs to the NAGSA dehydrogenase family. Type 2 subfamily.

It is found in the cytoplasm. The catalysed reaction is N-acetyl-L-glutamate 5-semialdehyde + phosphate + NADP(+) = N-acetyl-L-glutamyl 5-phosphate + NADPH + H(+). It participates in amino-acid biosynthesis; L-arginine biosynthesis; N(2)-acetyl-L-ornithine from L-glutamate: step 3/4. Catalyzes the NADPH-dependent reduction of N-acetyl-5-glutamyl phosphate to yield N-acetyl-L-glutamate 5-semialdehyde. This chain is N-acetyl-gamma-glutamyl-phosphate reductase, found in Rhizobium etli (strain ATCC 51251 / DSM 11541 / JCM 21823 / NBRC 15573 / CFN 42).